The chain runs to 1266 residues: Phosphatidylinositol 3,4,5-trisphosphate 5-phosphatase 2A (1266 aa).

Positions 15–111 (WMHRDLSRAA…GLVTTLLYPV (97 aa)) constitute an SH2 domain. Basic and acidic residues predominate over residues 114–123 (EETTEDRDYS). Disordered stretches follow at residues 114–159 (EETT…NVTA) and 879–951 (DMGG…DATT). Over residues 136 to 159 (TASTSSMTGSALVSTDTPPENVTA) the composition is skewed to polar residues. Basic and acidic residues-rich tracts occupy residues 915-924 (RVSEEGEKSS) and 931-944 (TKEE…KQDP). Residues 958-961 (NPAY) carry the NPXY motif motif. Tyrosine 961 carries the phosphotyrosine modification. Disordered stretches follow at residues 986–1132 (PLAN…SALD) and 1147–1174 (EVEY…SFPS). Residues 994-1012 (PPAGSVGKSKPPSGSSAQG) are compositionally biased toward low complexity. Over residues 1045-1056 (RPPPDFPPPPLP) the composition is skewed to pro residues. Residues 1203 to 1266 (SVDCSVGEWL…LLASLKQQQK (64 aa)) enclose the SAM domain.

It belongs to the inositol 1,4,5-trisphosphate 5-phosphatase family. Tyrosine phosphorylated by the members of the SRC family after exposure to a diverse array of extracellular stimuli.

The protein localises to the cytoplasm. It localises to the cytosol. The protein resides in the cytoskeleton. Its subcellular location is the membrane. It is found in the cell projection. The protein localises to the filopodium. It localises to the lamellipodium. The protein resides in the nucleus. Its subcellular location is the nucleus speckle. The catalysed reaction is a 1,2-diacyl-sn-glycero-3-phospho-(1D-myo-inositol-3,4,5-trisphosphate) + H2O = a 1,2-diacyl-sn-glycero-3-phospho-(1D-myo-inositol-3,4-bisphosphate) + phosphate. Functionally, phosphatidylinositol (PtdIns) phosphatase that specifically hydrolyzes the 5-phosphate of phosphatidylinositol-3,4,5-trisphosphate (PtdIns(3,4,5)P3) to produce PtdIns(3,4)P2, thereby negatively regulating the PI3K (phosphoinositide 3-kinase) pathways. Plays a central role in regulation of PI3K-dependent insulin signaling, although the precise molecular mechanisms and signaling pathways remain unclear. Part of a signaling pathway that regulates actin cytoskeleton remodeling. Required for the maintenance and dynamic remodeling of actin structures as well as in endocytosis, having a major impact on ligand-induced EGFR internalization and degradation. Participates in regulation of cortical and submembraneous actin. Regulates cell adhesion and cell spreading. Acts as a negative regulator of the FC-gamma-RIIA receptor (FCGR2A). Mediates signaling from the FC-gamma-RIIB receptor (FCGR2B), playing a central role in terminating signal transduction from activating immune/hematopoietic cell receptor systems. May also hydrolyze PtdIns(1,3,4,5)P4, and could thus affect the levels of the higher inositol polyphosphates like InsP6. This Danio rerio (Zebrafish) protein is Phosphatidylinositol 3,4,5-trisphosphate 5-phosphatase 2A (inppl1a).